A 380-amino-acid chain; its full sequence is Ribosomal RNA large subunit methyltransferase G (380 aa).

The protein belongs to the methyltransferase superfamily. RlmG family.

The protein localises to the cytoplasm. The catalysed reaction is guanosine(1835) in 23S rRNA + S-adenosyl-L-methionine = N(2)-methylguanosine(1835) in 23S rRNA + S-adenosyl-L-homocysteine + H(+). Its function is as follows. Specifically methylates the guanine in position 1835 (m2G1835) of 23S rRNA. The sequence is that of Ribosomal RNA large subunit methyltransferase G from Streptomyces avermitilis (strain ATCC 31267 / DSM 46492 / JCM 5070 / NBRC 14893 / NCIMB 12804 / NRRL 8165 / MA-4680).